The sequence spans 458 residues: Probable Xaa-Pro aminopeptidase pepP (458 aa).

4 residues coordinate Mn(2+): D254, D265, E388, and E428.

This sequence belongs to the peptidase M24B family. Mn(2+) serves as cofactor.

It carries out the reaction Release of any N-terminal amino acid, including proline, that is linked to proline, even from a dipeptide or tripeptide.. In terms of biological role, catalyzes the removal of a penultimate prolyl residue from the N-termini of peptides. In Botryotinia fuckeliana (strain B05.10) (Noble rot fungus), this protein is Probable Xaa-Pro aminopeptidase pepP (pepP).